Consider the following 397-residue polypeptide: Bifunctional enzyme IspD/IspF (397 aa).

The segment at 1–236 is 2-C-methyl-D-erythritol 4-phosphate cytidylyltransferase; that stretch reads MSIAAVILAA…QKKMQMFPDI (236 aa). Residues 237-397 are 2-C-methyl-D-erythritol 2,4-cyclodiphosphate synthase; it reads RTGNGYDVHS…NVLYPGEIPK (161 aa). Residues D243 and H245 each coordinate a divalent metal cation. 4-CDP-2-C-methyl-D-erythritol 2-phosphate-binding positions include 243–245 and 269–270; these read DVH and HS. An a divalent metal cation-binding site is contributed by H277. Residues 291–293, 367–370, F374, and R377 contribute to the 4-CDP-2-C-methyl-D-erythritol 2-phosphate site; these read DIG and TTNE.

It in the N-terminal section; belongs to the IspD/TarI cytidylyltransferase family. IspD subfamily. The protein in the C-terminal section; belongs to the IspF family. A divalent metal cation serves as cofactor.

The enzyme catalyses 2-C-methyl-D-erythritol 4-phosphate + CTP + H(+) = 4-CDP-2-C-methyl-D-erythritol + diphosphate. The catalysed reaction is 4-CDP-2-C-methyl-D-erythritol 2-phosphate = 2-C-methyl-D-erythritol 2,4-cyclic diphosphate + CMP. Its pathway is isoprenoid biosynthesis; isopentenyl diphosphate biosynthesis via DXP pathway; isopentenyl diphosphate from 1-deoxy-D-xylulose 5-phosphate: step 2/6. The protein operates within isoprenoid biosynthesis; isopentenyl diphosphate biosynthesis via DXP pathway; isopentenyl diphosphate from 1-deoxy-D-xylulose 5-phosphate: step 4/6. In terms of biological role, bifunctional enzyme that catalyzes the formation of 4-diphosphocytidyl-2-C-methyl-D-erythritol from CTP and 2-C-methyl-D-erythritol 4-phosphate (MEP) (IspD), and catalyzes the conversion of 4-diphosphocytidyl-2-C-methyl-D-erythritol 2-phosphate (CDP-ME2P) to 2-C-methyl-D-erythritol 2,4-cyclodiphosphate (ME-CPP) with a corresponding release of cytidine 5-monophosphate (CMP) (IspF). This is Bifunctional enzyme IspD/IspF from Bartonella henselae (strain ATCC 49882 / DSM 28221 / CCUG 30454 / Houston 1) (Rochalimaea henselae).